The chain runs to 448 residues: Probable tryptophanase (448 aa).

Lys253 is subject to N6-(pyridoxal phosphate)lysine.

Belongs to the beta-eliminating lyase family. Requires pyridoxal 5'-phosphate as cofactor.

The enzyme catalyses L-tryptophan + H2O = indole + pyruvate + NH4(+). Its pathway is amino-acid degradation; L-tryptophan degradation via pyruvate pathway; indole and pyruvate from L-tryptophan: step 1/1. The sequence is that of Probable tryptophanase from Halobacterium salinarum (strain ATCC 29341 / DSM 671 / R1).